A 53-amino-acid polypeptide reads, in one-letter code: UPF0391 membrane protein Bmul_5473/BMULJ_06024 (53 aa).

Helical transmembrane passes span 5-25 (ALIF…GIAA) and 30-50 (IAKI…LLGV).

Belongs to the UPF0391 family.

It is found in the cell membrane. This is UPF0391 membrane protein Bmul_5473/BMULJ_06024 from Burkholderia multivorans (strain ATCC 17616 / 249).